We begin with the raw amino-acid sequence, 347 residues long: NADH-quinone oxidoreductase subunit H (347 aa).

9 helical membrane-spanning segments follow: residues 13-33 (LIIA…VAYL), 50-70 (PNVV…KFVF), 82-102 (GVFL…WAVI), 115-135 (VGIL…IMGG), 161-181 (IGFV…TDIV), 198-218 (FLDW…ISAL), 248-268 (FLLF…LMTV), 286-306 (VPGI…FAMV), and 325-345 (VFLP…KVFG).

The protein belongs to the complex I subunit 1 family. In terms of assembly, NDH-1 is composed of 14 different subunits. Subunits NuoA, H, J, K, L, M, N constitute the membrane sector of the complex.

It is found in the cell inner membrane. The catalysed reaction is a quinone + NADH + 5 H(+)(in) = a quinol + NAD(+) + 4 H(+)(out). NDH-1 shuttles electrons from NADH, via FMN and iron-sulfur (Fe-S) centers, to quinones in the respiratory chain. The immediate electron acceptor for the enzyme in this species is believed to be ubiquinone. Couples the redox reaction to proton translocation (for every two electrons transferred, four hydrogen ions are translocated across the cytoplasmic membrane), and thus conserves the redox energy in a proton gradient. This subunit may bind ubiquinone. The chain is NADH-quinone oxidoreductase subunit H from Brucella ovis (strain ATCC 25840 / 63/290 / NCTC 10512).